The following is a 440-amino-acid chain: D-serine dehydratase (440 aa).

K116 is subject to N6-(pyridoxal phosphate)lysine.

Belongs to the serine/threonine dehydratase family. DsdA subfamily. As to quaternary structure, monomer. Pyridoxal 5'-phosphate is required as a cofactor.

It catalyses the reaction D-serine = pyruvate + NH4(+). The sequence is that of D-serine dehydratase from Salmonella enteritidis PT4 (strain P125109).